The primary structure comprises 738 residues: Alanine--tRNA ligase (738 aa).

Zn(2+)-binding residues include histidine 564, histidine 568, cysteine 666, and histidine 670.

Belongs to the class-II aminoacyl-tRNA synthetase family. In terms of assembly, homotetramer. The cofactor is Zn(2+).

It is found in the cytoplasm. It catalyses the reaction tRNA(Ala) + L-alanine + ATP = L-alanyl-tRNA(Ala) + AMP + diphosphate. In terms of biological role, catalyzes the attachment of alanine to tRNA(Ala) in a two-step reaction: alanine is first activated by ATP to form Ala-AMP and then transferred to the acceptor end of tRNA(Ala). Also edits incorrectly charged Ser-tRNA(Ala) and Gly-tRNA(Ala) via its editing domain. The sequence is that of Alanine--tRNA ligase (alaS) from Yersinia pestis bv. Antiqua (strain Antiqua).